We begin with the raw amino-acid sequence, 349 residues long: Cbb3-type cytochrome c oxidase subunit CcoP (349 aa).

Residues 1 to 67 (MADTDDEHAS…RVVRDRKGGR (67 aa)) are disordered. The Cytoplasmic portion of the chain corresponds to 1–96 (MADTDDEHAS…NPLPRWWLWT (96 aa)). Residues 16–30 (NRIELERQAADEAHK) are compositionally biased toward basic and acidic residues. A helical membrane pass occupies residues 97–117 (FYATIVWGVLYLIAYPAIPLV). Topologically, residues 118-349 (NGATQGLLGQ…AYVHSLGGGE (232 aa)) are periplasmic. 2 consecutive Cytochrome c domains span residues 168–258 (YTAN…LELG) and 265–346 (ALAA…HSLG). Residues Cys-181, Cys-184, His-185, Met-233, Cys-278, Cys-281, His-282, and Met-323 each contribute to the heme c site.

It belongs to the CcoP / FixP family. In terms of assembly, component of the cbb3-type cytochrome c oxidase at least composed of CcoN, CcoO, CcoQ and CcoP. It depends on heme c as a cofactor.

The protein resides in the cell inner membrane. Its pathway is energy metabolism; oxidative phosphorylation. Functionally, C-type cytochrome. Part of the cbb3-type cytochrome c oxidase complex. CcoP subunit is required for transferring electrons from donor cytochrome c via its heme groups to CcoO subunit. From there, electrons are shuttled to the catalytic binuclear center of CcoN subunit where oxygen reduction takes place. The complex also functions as a proton pump. The protein is Cbb3-type cytochrome c oxidase subunit CcoP of Paracoccus denitrificans (strain Pd 1222).